The chain runs to 621 residues: GPI-anchor transamidase component GPAA1 (621 aa).

Over 2–19 (GLLSDPVRRRALARLVLR) the chain is Cytoplasmic. Residues 20–41 (LNAPLCVLSYVAGIAWFLALVF) form a helical membrane-spanning segment. The Lumenal portion of the chain corresponds to 42 to 370 (PPLTQRTYMS…LLPGLSRFVS (329 aa)). 2 residues coordinate a 2-acyl-6-[6-phosphoethanolamine-alpha-D-mannosyl-(1-&gt;2)-6-phosphoethanolamine-alpha-D-mannosyl-(1-&gt;6)-2-phosphoethanolamine-alpha-D-mannosyl-(1-&gt;4)-alpha-D-glucosaminyl]-1-(1-radyl,2-acyl-sn-glycero-3-phospho)-1D-myo-inositol: Y49 and S51. A glycan (N-linked (GlcNAc...) asparagine) is linked at N203. C259 and C266 are joined by a disulfide. Positions 354, 355, and 356 each coordinate a 2-acyl-6-[6-phosphoethanolamine-alpha-D-mannosyl-(1-&gt;2)-6-phosphoethanolamine-alpha-D-mannosyl-(1-&gt;6)-2-phosphoethanolamine-alpha-D-mannosyl-(1-&gt;4)-alpha-D-glucosaminyl]-1-(1-radyl,2-acyl-sn-glycero-3-phospho)-1D-myo-inositol. Position 355 (Q355) interacts with Mg(2+). A helical membrane pass occupies residues 371-393 (IGLYMPAVGFLLLVLGLKALELW). Residues 394–425 (MQLHEAGMGLEEPGGAPGPSVPLPPSQGVGLA) are Cytoplasmic-facing. The chain crosses the membrane as a helical span at residues 426-450 (SLVAPLLISQAMGLALYVLPVLGQH). The Lumenal segment spans residues 451-462 (VATQHFPVAEAE). A helical transmembrane segment spans residues 463 to 483 (AVVLTLLAIYAAGLALPHNTH). Residues 484–495 (RVVSTQAPDRGW) lie on the Cytoplasmic side of the membrane. 2 helical membrane-spanning segments follow: residues 496 to 519 (MALK…TNFS) and 520 to 536 (LGFL…ALAK). At 537–540 (PHGP) the chain is on the cytoplasmic side. A helical transmembrane segment spans residues 541–563 (RTLYAALLVLTSPAATLLGSLFL). Over 564-597 (WRELQEAPLSLAEGWQLFLAALAQGVLEHHTYGA) the chain is Lumenal. A helical transmembrane segment spans residues 598–619 (LLFPLLSLGLYPCWLLFWNVLF). The Cytoplasmic segment spans residues 620 to 621 (WK).

Heteropentamer. Part of the GPI-anchor transamidase complex, consisting of PIGK, PIGT, PIGS, PIGU and GAA1. Interacts with PIGK. In terms of tissue distribution, ubiquitously expressed in fetal and adult tissues. Expressed at higher levels in fetal tissues than adult tissues.

The protein localises to the endoplasmic reticulum membrane. It functions in the pathway glycolipid biosynthesis; glycosylphosphatidylinositol-anchor biosynthesis. Functionally, component of the glycosylphosphatidylinositol-anchor (GPI-anchor) transamidase (GPI-T) complex that catalyzes the formation of the linkage between a proprotein and a GPI-anchor and participates in GPI anchored protein biosynthesis. Binds GPI-anchor. The chain is GPI-anchor transamidase component GPAA1 from Homo sapiens (Human).